The primary structure comprises 211 residues: Thioredoxin domain-containing protein 9 homolog (211 aa).

The region spanning 68-178 (YSEIHSEKDF…LEERIARAQV (111 aa)) is the Thioredoxin domain. A compositionally biased stretch (polar residues) spans 184–203 (ESSSLKPKSTTQVRRNVRQS). The disordered stretch occupies residues 184 to 211 (ESSSLKPKSTTQVRRNVRQSARSDSDSE).

This Arabidopsis thaliana (Mouse-ear cress) protein is Thioredoxin domain-containing protein 9 homolog.